The primary structure comprises 433 residues: Xylose isomerase (433 aa).

Residues His99 and Asp102 contribute to the active site. Residues Glu230, Glu266, His269, Asp294, Asp305, Asp307, and Asp337 each coordinate Mg(2+).

The protein belongs to the xylose isomerase family. As to quaternary structure, homotetramer. Requires Mg(2+) as cofactor.

It is found in the cytoplasm. The catalysed reaction is alpha-D-xylose = alpha-D-xylulofuranose. The sequence is that of Xylose isomerase from Roseobacter denitrificans (strain ATCC 33942 / OCh 114) (Erythrobacter sp. (strain OCh 114)).